A 256-amino-acid polypeptide reads, in one-letter code: Trans-aconitate 2-methyltransferase (256 aa).

It belongs to the methyltransferase superfamily. Tam family.

The protein localises to the cytoplasm. It catalyses the reaction trans-aconitate + S-adenosyl-L-methionine = (E)-3-(methoxycarbonyl)pent-2-enedioate + S-adenosyl-L-homocysteine. Its function is as follows. Catalyzes the S-adenosylmethionine monomethyl esterification of trans-aconitate. In Rhodopseudomonas palustris (strain BisB18), this protein is Trans-aconitate 2-methyltransferase.